The sequence spans 353 residues: Probable WRKY transcription factor 7 (353 aa).

The disordered stretch occupies residues 117–259 (VEEKKPETSS…SSRCHCSKKR (143 aa)). Residues 158-176 (SHNNNNNQNQTKNGSSSSS) are compositionally biased toward low complexity. 2 stretches are compositionally biased toward polar residues: residues 184-204 (APST…SFMS) and 213-229 (THMS…QLSG). The WRKY DNA-binding region spans 275-341 (KMADIPSDEF…YEGDHNHALV (67 aa)).

The protein belongs to the WRKY group II-d family. As to expression, in young, mature and senescent leaves.

It localises to the nucleus. Functionally, transcription factor. Interacts specifically with the W box (5'-(T)TGAC[CT]-3'), a frequently occurring elicitor-responsive cis-acting element. The sequence is that of Probable WRKY transcription factor 7 (WRKY7) from Arabidopsis thaliana (Mouse-ear cress).